The chain runs to 67 residues: DNA-directed RNA polymerase subunit omega (67 aa).

Belongs to the RNA polymerase subunit omega family. As to quaternary structure, the RNAP catalytic core consists of 2 alpha, 1 beta, 1 beta' and 1 omega subunit. When a sigma factor is associated with the core the holoenzyme is formed, which can initiate transcription.

The catalysed reaction is RNA(n) + a ribonucleoside 5'-triphosphate = RNA(n+1) + diphosphate. In terms of biological role, promotes RNA polymerase assembly. Latches the N- and C-terminal regions of the beta' subunit thereby facilitating its interaction with the beta and alpha subunits. The protein is DNA-directed RNA polymerase subunit omega of Acidovorax ebreus (strain TPSY) (Diaphorobacter sp. (strain TPSY)).